A 59-amino-acid polypeptide reads, in one-letter code: UPF0181 protein YoaH (59 aa).

Belongs to the UPF0181 family.

In Shigella flexneri serotype 5b (strain 8401), this protein is UPF0181 protein YoaH.